The sequence spans 241 residues: Xyloglucan-specific endo-beta-1,4-glucanase 1 (241 aa).

The N-terminal stretch at 1–19 (MKGLLAGTIAAATFAVASA) is a signal peptide. Glutamate 136 is a catalytic residue. N-linked (GlcNAc...) asparagine glycans are attached at residues asparagine 174 and asparagine 190. Glutamate 222 is an active-site residue.

Belongs to the glycosyl hydrolase 12 (cellulase H) family. Interacts with host apoplastic glucanase inhibitor GIP2.

It carries out the reaction xyloglucan + H2O = xyloglucan oligosaccharides.. Its activity is regulated as follows. The xyloglucanase activity is inhibited by the binding of the host apoplastic glucanase inhibitor GIP2. In terms of biological role, glycoside hydrolase that exhibits xyloglucanase activity. Acts as an important virulence factor during P.parasitica infection of its host Nicotiana benthamiana. Also acts as a pathogen-associated molecular pattern (PAMP) in host species, where it can trigger defense responses including cell death. The PAMP activity is independent of its xyloglucanase activity. With paralog XLP1, is required to elevate apoplastic sugar during P.parasitica infection. This is Xyloglucan-specific endo-beta-1,4-glucanase 1 from Phytophthora nicotianae (strain INRA-310) (Phytophthora parasitica).